The sequence spans 461 residues: Ribitol-5-phosphate transferase FKTN (461 aa).

The Cytoplasmic segment spans residues 1-7; it reads MSRINKN. Residues 6-27 are required and sufficient for interaction with POMGNT1; the sequence is KNVVLALLTLTSSAFLLFQLYY. A helical; Signal-anchor for type II membrane protein membrane pass occupies residues 8-28; it reads VVLALLTLTSSAFLLFQLYYY. The Lumenal segment spans residues 29 to 461; it reads KHYLSTKNGA…SEWDEVIQLY (433 aa). N-linked (GlcNAc...) asparagine glycosylation occurs at asparagine 92.

Belongs to the LicD transferase family. As to quaternary structure, forms a complex composed of FKTN/fukutin, FKRP and RXYLT1/TMEM5. Interacts (via transmembrane domain) with POMGNT1; the interaction is direct and is required for normal POMGNT1 location in Golgi membranes. As to expression, expressed in the retina (at protein level). Widely expressed with highest expression in brain, heart, pancreas and skeletal muscle. Expressed at similar levels in control fetal and adult brain. Expressed in migrating neurons, including Cajar-Retzius cells and adult cortical neurons, as well as hippocampal pyramidal cells and cerebellar Purkinje cells. No expression observed in the glia limitans, the subpial astrocytes (which contribute to basement membrane formation) or other glial cells.

The protein localises to the golgi apparatus membrane. The protein resides in the cytoplasm. It is found in the nucleus. The catalysed reaction is 3-O-[beta-D-GalNAc-(1-&gt;3)-beta-D-GlcNAc-(1-&gt;4)-(O-6-P-alpha-D-Man)]-Thr-[protein] + CDP-L-ribitol = 3-O-[Rib-ol-P-3-beta-D-GalNAc-(1-&gt;3)-beta-D-GlcNAc-(1-&gt;4)-(O-6-P-alpha-D-Man)]-Thr-[protein] + CMP + H(+). It participates in protein modification; protein glycosylation. Functionally, catalyzes the transfer of a ribitol-phosphate from CDP-ribitol to the distal N-acetylgalactosamine of the phosphorylated O-mannosyl trisaccharide (N-acetylgalactosamine-beta-3-N-acetylglucosamine-beta-4-(phosphate-6-)mannose), a carbohydrate structure present in alpha-dystroglycan (DAG1). This constitutes the first step in the formation of the ribitol 5-phosphate tandem repeat which links the phosphorylated O-mannosyl trisaccharide to the ligand binding moiety composed of repeats of 3-xylosyl-alpha-1,3-glucuronic acid-beta-1. Required for normal location of POMGNT1 in Golgi membranes, and for normal POMGNT1 activity. May interact with and reinforce a large complex encompassing the outside and inside of muscle membranes. Could be involved in brain development. The chain is Ribitol-5-phosphate transferase FKTN from Homo sapiens (Human).